The sequence spans 225 residues: Small ribosomal subunit protein L51-b (225 aa).

Residues 1–84 (MKFPDLLRCS…QCAFISSDRF (84 aa)) constitute a mitochondrion transit peptide.

The protein belongs to the bacterial ribosomal protein bS1 family. As to quaternary structure, component of the mitochondrial small ribosomal subunit (mt-SSU). Mature yeast 74S mitochondrial ribosomes consist of a small (37S) and a large (54S) subunit. The 37S small subunit contains a 15S ribosomal RNA (15S mt-rRNA) and at least 32 different proteins. The 54S large subunit contains a 21S rRNA (21S mt-rRNA) and at least 45 different proteins. This subunit is mutually exclusive with mrp51/small ribosomal subunit protein bS1m.

Its subcellular location is the mitochondrion. Component of the mitochondrial ribosome (mitoribosome), a dedicated translation machinery responsible for the synthesis of mitochondrial genome-encoded proteins, including at least some of the essential transmembrane subunits of the mitochondrial respiratory chain. The mitoribosomes are attached to the mitochondrial inner membrane and translation products are cotranslationally integrated into the membrane. Functionally interacts with the 5'-UTR of mitochondrial mRNAs. Specifically plays a role in the translation of cob1/cytochrome b and cox3. Has a role in meiosis. This chain is Small ribosomal subunit protein L51-b, found in Schizosaccharomyces pombe (strain 972 / ATCC 24843) (Fission yeast).